The following is a 150-amino-acid chain: 6,7-dimethyl-8-ribityllumazine synthase (150 aa).

Residues Phe11, Val43–Asp45, and Ala67–Ile69 contribute to the 5-amino-6-(D-ribitylamino)uracil site. Ala72 to Thr73 lines the (2S)-2-hydroxy-3-oxobutyl phosphate pocket. Residue His75 is the Proton donor of the active site. Leu100 serves as a coordination point for 5-amino-6-(D-ribitylamino)uracil. Arg115 is a binding site for (2S)-2-hydroxy-3-oxobutyl phosphate.

It belongs to the DMRL synthase family.

It catalyses the reaction (2S)-2-hydroxy-3-oxobutyl phosphate + 5-amino-6-(D-ribitylamino)uracil = 6,7-dimethyl-8-(1-D-ribityl)lumazine + phosphate + 2 H2O + H(+). The protein operates within cofactor biosynthesis; riboflavin biosynthesis; riboflavin from 2-hydroxy-3-oxobutyl phosphate and 5-amino-6-(D-ribitylamino)uracil: step 1/2. Functionally, catalyzes the formation of 6,7-dimethyl-8-ribityllumazine by condensation of 5-amino-6-(D-ribitylamino)uracil with 3,4-dihydroxy-2-butanone 4-phosphate. This is the penultimate step in the biosynthesis of riboflavin. The polypeptide is 6,7-dimethyl-8-ribityllumazine synthase (Pyrobaculum aerophilum (strain ATCC 51768 / DSM 7523 / JCM 9630 / CIP 104966 / NBRC 100827 / IM2)).